The following is a 708-amino-acid chain: MNQYLAVTSNGLENLLVEELTQLGINDAKPVQAGVKFKATNEQIYRCCLWSRLASRFVRIVAEFKCQNDLDLYLSTTSVNWVNYFHSSKKLVVDFNGTNREIRNSQYGAMKVKDAIVDCFTKKNLPRPSISKDLADLHIHVRLHKENALLGIDMVGSGLHARGYRTEAGKAPLRETLAAAIILRSGWDASKPLLDPMCGSGTLLIEAAMMAANIAPGLQRKKWGFEALEDFEPELWASVKSEASVQGKRGVKKVETHFYGVDNDNRVLQTAKDNARRAGVEELISFTLGDAAKVKRPENFAEGIVICNPPYGERLGTHPGLIALYTAFGAQLKAEFGGCHASIFSSSDELLSCLRMRADKQFKLNNGALPCHQKNYTIAMREQNSVSNEGTQEILIAPDFANRLKKNFNKIGKWAKREGLDCFRLYDADLPEYNVAIDVYQDHLMIQEYAAPKDIPEEKAKRRLTDIIRAAIQVLDVDANNVVLKVRERQKGTSQYEKLGQQAQTMQITEYGVKLIVNLYDYLDTGLFLDHKITRRRLGQMAQGKDFLNLFAYTGSATVHAACGGAKSTTTVDMSKTYLEWAKENMQLNGQVGRQHQYVQADCLQWLANAQSQYDLIFIDPPTFSNSKRMEQTFDVQRDHVTLMTNLKRLLRPEGTIVFSNNKRHFKMDMEALHALGLNAQNISHQTLPLDFERNKQIHNCWLITHQS.

A THUMP domain is found at 43-154; it reads QIYRCCLWSR…KENALLGIDM (112 aa).

It belongs to the methyltransferase superfamily. RlmKL family.

It is found in the cytoplasm. The enzyme catalyses guanosine(2445) in 23S rRNA + S-adenosyl-L-methionine = N(2)-methylguanosine(2445) in 23S rRNA + S-adenosyl-L-homocysteine + H(+). The catalysed reaction is guanosine(2069) in 23S rRNA + S-adenosyl-L-methionine = N(2)-methylguanosine(2069) in 23S rRNA + S-adenosyl-L-homocysteine + H(+). Specifically methylates the guanine in position 2445 (m2G2445) and the guanine in position 2069 (m7G2069) of 23S rRNA. The polypeptide is Ribosomal RNA large subunit methyltransferase K/L (Vibrio cholerae serotype O1 (strain ATCC 39541 / Classical Ogawa 395 / O395)).